The primary structure comprises 235 residues: Thymidylate kinase (235 aa).

10 to 17 (GINGVEKS) is a binding site for ATP.

This sequence belongs to the thymidylate kinase family.

The enzyme catalyses dTMP + ATP = dTDP + ADP. It participates in pyrimidine metabolism; dTTP biosynthesis. Catalyzes the conversion of dTMP to dTDP. This African swine fever virus (isolate Pig/Kenya/KEN-50/1950) (ASFV) protein is Thymidylate kinase (TMK).